The sequence spans 230 residues: Flavin-dependent thymidylate synthase (230 aa).

A ThyX domain is found at 1 to 217 (MEIKVLEKGF…PVTYEAFLNF (217 aa)). FAD-binding positions include serine 55, 78–80 (RHR), and glutamate 86. Residues 75 to 78 (QLVR), 86 to 90 (ERSGR), and arginine 156 contribute to the dUMP site. Positions 78–88 (RHRIASINERS) match the ThyX motif motif. Residues 172–174 (NAR) and asparagine 178 each bind FAD. A dUMP-binding site is contributed by arginine 183. The Involved in ionization of N3 of dUMP, leading to its activation role is filled by arginine 183.

The protein belongs to the thymidylate synthase ThyX family. As to quaternary structure, homotetramer. Requires FAD as cofactor.

The catalysed reaction is dUMP + (6R)-5,10-methylene-5,6,7,8-tetrahydrofolate + NADPH + H(+) = dTMP + (6S)-5,6,7,8-tetrahydrofolate + NADP(+). Its pathway is pyrimidine metabolism; dTTP biosynthesis. Functionally, catalyzes the reductive methylation of 2'-deoxyuridine-5'-monophosphate (dUMP) to 2'-deoxythymidine-5'-monophosphate (dTMP) while utilizing 5,10-methylenetetrahydrofolate (mTHF) as the methyl donor, and NADPH and FADH(2) as the reductant. The chain is Flavin-dependent thymidylate synthase from Kosmotoga olearia (strain ATCC BAA-1733 / DSM 21960 / TBF 19.5.1).